We begin with the raw amino-acid sequence, 1380 residues long: DNA-directed RNA polymerase subunit beta (1380 aa).

This sequence belongs to the RNA polymerase beta chain family. The RNAP catalytic core consists of 2 alpha, 1 beta, 1 beta' and 1 omega subunit. When a sigma factor is associated with the core the holoenzyme is formed, which can initiate transcription.

It catalyses the reaction RNA(n) + a ribonucleoside 5'-triphosphate = RNA(n+1) + diphosphate. DNA-dependent RNA polymerase catalyzes the transcription of DNA into RNA using the four ribonucleoside triphosphates as substrates. This is DNA-directed RNA polymerase subunit beta from Rhizobium meliloti (strain 1021) (Ensifer meliloti).